The chain runs to 301 residues: Heterogeneous nuclear ribonucleoprotein D-like (301 aa).

A disordered region spans residues 1–29 (MEDATEMSGGAEEFAEGSKINASKNQQDD). 2 RRM domains span residues 30–112 (GKMF…KGKE) and 115–194 (KKVF…QPKE). Disordered stretches follow at residues 194 to 230 (EVYRQQQQQQKGGKSNASGGRGGGRGRGRGQGQNWNQ) and 269 to 301 (GYGPGYTDYSGQQSTYGKASRGGGNHQNNYQPY). Residues 212–224 (GGRGGGRGRGRGQ) are compositionally biased toward gly residues.

It localises to the nucleus. It is found in the cytoplasm. Functionally, acts as a transcriptional regulator. Binds DNA and RNA. This is Heterogeneous nuclear ribonucleoprotein D-like (HNRNPDL) from Gallus gallus (Chicken).